The following is a 477-amino-acid chain: Aspartyl/glutamyl-tRNA(Asn/Gln) amidotransferase subunit B (477 aa).

Belongs to the GatB/GatE family. GatB subfamily. Heterotrimer of A, B and C subunits.

The enzyme catalyses L-glutamyl-tRNA(Gln) + L-glutamine + ATP + H2O = L-glutaminyl-tRNA(Gln) + L-glutamate + ADP + phosphate + H(+). It catalyses the reaction L-aspartyl-tRNA(Asn) + L-glutamine + ATP + H2O = L-asparaginyl-tRNA(Asn) + L-glutamate + ADP + phosphate + 2 H(+). Allows the formation of correctly charged Asn-tRNA(Asn) or Gln-tRNA(Gln) through the transamidation of misacylated Asp-tRNA(Asn) or Glu-tRNA(Gln) in organisms which lack either or both of asparaginyl-tRNA or glutaminyl-tRNA synthetases. The reaction takes place in the presence of glutamine and ATP through an activated phospho-Asp-tRNA(Asn) or phospho-Glu-tRNA(Gln). The chain is Aspartyl/glutamyl-tRNA(Asn/Gln) amidotransferase subunit B from Coxiella burnetii (strain CbuK_Q154) (Coxiella burnetii (strain Q154)).